The chain runs to 283 residues: K88 fimbrial protein AC (283 aa).

Residues 1-21 (MKKTLIALAIAASAASGMAHA) form the signal peptide.

This sequence belongs to the fimbrial K88 protein family. In terms of assembly, K88 fimbria, 0.1-1 micrometer in length and 7 nanometers in diameter, is composed of about 100 identical subunits.

The protein resides in the fimbrium. K88 major fimbrial subunit. Fimbriae (also called pili), are polar filaments radiating from the surface of the bacterium to a length of 0.5-1.5 micrometers and numbering 100-300 per cell. They enable bacteria to colonize the epithelium of specific host organs. The protein is K88 fimbrial protein AC (faeG) of Escherichia coli.